A 796-amino-acid polypeptide reads, in one-letter code: Protein translocase subunit SecA 2 (796 aa).

Residues Gln84, 102 to 106 (GEGKT), and Asp496 each bind ATP.

This sequence belongs to the SecA family. Monomer and homodimer (Potential). Part of the accessory SecA2/SecY2 protein translocation apparatus required to export cell wall protein SraP.

It is found in the cell membrane. It localises to the cytoplasm. The catalysed reaction is ATP + H2O + cellular proteinSide 1 = ADP + phosphate + cellular proteinSide 2.. Its function is as follows. Part of the accessory SecA2/SecY2 system specifically required to export SraP, a serine-rich repeat cell wall protein encoded upstream in the same operon. In Staphylococcus aureus (strain NCTC 8325 / PS 47), this protein is Protein translocase subunit SecA 2.